An 86-amino-acid polypeptide reads, in one-letter code: Large ribosomal subunit protein bL27 (86 aa).

Residues 1 to 10 (MAQKKGGGST) show a composition bias toward gly residues. Residues 1–21 (MAQKKGGGSTRNGRDSESKRL) form a disordered region.

The protein belongs to the bacterial ribosomal protein bL27 family.

The protein is Large ribosomal subunit protein bL27 of Cupriavidus taiwanensis (strain DSM 17343 / BCRC 17206 / CCUG 44338 / CIP 107171 / LMG 19424 / R1) (Ralstonia taiwanensis (strain LMG 19424)).